We begin with the raw amino-acid sequence, 485 residues long: Sulfated surface glycoprotein 185 (485 aa).

The first 20 residues, 1–20 (MSKLLLVALFGAIAVVATSA), serve as a signal peptide directing secretion. A glycan (N-linked (GlcNAc...) asparagine) is linked at asparagine 193. The tract at residues 212 to 317 (LSGPNVNPIG…PPVPPPPSPP (106 aa)) is disordered. Pro residues-rich tracts occupy residues 221 to 234 (GPAP…PSPQ) and 241 to 317 (PPSP…PSPP). An N-linked (GlcNAc...) asparagine glycan is attached at asparagine 347.

In terms of assembly, polymer. Intersubunit cross-links are formed between saccharide chains rather than between polypeptide chains. In terms of processing, hydroxylated on proline residues in the Pro-rich central domain. Post-translationally, glycosylated; contains sulfate-substituted glycans.

In terms of biological role, the extracellular matrix (ECM) of Volvox contains insoluble fibrous layers that surround individual cells at a distance to form contiguous cellular compartments. SSG 185 is the monomeric precursor of this substructure (C3Z structure). This chain is Sulfated surface glycoprotein 185, found in Volvox carteri (Green alga).